The following is a 154-amino-acid chain: Transcription antitermination protein NusB (154 aa).

Belongs to the NusB family.

In terms of biological role, involved in transcription antitermination. Required for transcription of ribosomal RNA (rRNA) genes. Binds specifically to the boxA antiterminator sequence of the ribosomal RNA (rrn) operons. This Rickettsia typhi (strain ATCC VR-144 / Wilmington) protein is Transcription antitermination protein NusB.